The following is a 473-amino-acid chain: tRNA-2-methylthio-N(6)-dimethylallyladenosine synthase (473 aa).

The tract at residues 1–21 (MTQDSALLQAPEAIPSESLRD) is disordered. The MTTase N-terminal domain occupies 26-146 (RKVFIKTYGC…LPEALRRAKQ (121 aa)). [4Fe-4S] cluster is bound by residues C35, C71, C109, C187, C191, and C194. The Radical SAM core domain maps to 173–405 (RARGVTAFLT…QMLLLKQQQE (233 aa)). The 63-residue stretch at 408–470 (ESCVGKEIDL…TNSLFAEHAE (63 aa)) folds into the TRAM domain.

It belongs to the methylthiotransferase family. MiaB subfamily. Monomer. [4Fe-4S] cluster is required as a cofactor.

It is found in the cytoplasm. The catalysed reaction is N(6)-dimethylallyladenosine(37) in tRNA + (sulfur carrier)-SH + AH2 + 2 S-adenosyl-L-methionine = 2-methylsulfanyl-N(6)-dimethylallyladenosine(37) in tRNA + (sulfur carrier)-H + 5'-deoxyadenosine + L-methionine + A + S-adenosyl-L-homocysteine + 2 H(+). Its function is as follows. Catalyzes the methylthiolation of N6-(dimethylallyl)adenosine (i(6)A), leading to the formation of 2-methylthio-N6-(dimethylallyl)adenosine (ms(2)i(6)A) at position 37 in tRNAs that read codons beginning with uridine. The protein is tRNA-2-methylthio-N(6)-dimethylallyladenosine synthase of Rhizobium johnstonii (strain DSM 114642 / LMG 32736 / 3841) (Rhizobium leguminosarum bv. viciae).